Consider the following 123-residue polypeptide: UPF0102 protein VSAL_I2655 (123 aa).

Belongs to the UPF0102 family.

The sequence is that of UPF0102 protein VSAL_I2655 from Aliivibrio salmonicida (strain LFI1238) (Vibrio salmonicida (strain LFI1238)).